The following is a 778-amino-acid chain: Protein SPT2 homolog (778 aa).

Disordered regions lie at residues 1–21 (MDFHSVLKMAAAKPGSDGIAK), 50–625 (KKDE…AKPK), and 639–685 (VPKS…DDDD). The tract at residues 1–665 (MDFHSVLKMA…PGHRPAMRPP (665 aa)) is important for interaction with DNA. A coiled-coil region spans residues 44–83 (VQAFLRKKDEESRRKETVEKRKKEDLLAKRKELKHDRKAR). Over residues 50-78 (KKDEESRRKETVEKRKKEDLLAKRKELKH) the composition is skewed to basic and acidic residues. Residues 114–135 (EEDQNDNMAAEGEEYMTEEELY) are compositionally biased toward acidic residues. Residues 153–167 (QKVPKPAPGKKPPTP) show a composition bias toward pro residues. The segment covering 190–227 (RPVKKEERLRTAEELKELEFLERKAQKADRKDPKRNEQ) has biased composition (basic and acidic residues). Positions 193–221 (KKEERLRTAEELKELEFLERKAQKADRKD) form a coiled coil. Residues 242 to 269 (LKGTHSGNSKSSSTEQNGTIRKSSSDTG) show a composition bias toward polar residues. Over residues 270 to 286 (SRTEKSGSVFHTKESKK) the composition is skewed to basic and acidic residues. The segment covering 312–335 (SSQPSAASNSAFGRPSGSARPSGS) has biased composition (low complexity). Gly residues-rich tracts occupy residues 336–357 (SGPGRPLGGSGSSSGKSTGGSA) and 365–384 (GGSGSGSGKPMGGSGSGKPI). Residues 385–394 (GGLHSSHGSG) show a composition bias toward low complexity. Residues 395–417 (KPTGGTGSGSGKPTGASGSGSGK) show a composition bias toward gly residues. Low complexity-rich tracts occupy residues 418 to 493 (PTGS…SGSA) and 506 to 559 (GSGS…PSSS). Over residues 588–604 (VRPNSTSVPGSARSSLG) the composition is skewed to polar residues. Positions 662 to 671 (MRPPGPPLPP) are enriched in pro residues. The interval 666 to 778 (GPPLPPITSS…QLKAAKKMSR (113 aa)) is important for interaction with histones. The stretch at 735-778 (REQQKEEARSLRLGIQEDLEELQREEEELKRKAKQLKAAKKMSR) forms a coiled coil.

This sequence belongs to the SPT2 family. As to quaternary structure, interacts with histones. Interacts with a heterotetrameric complex formed by histone H3 and H4, especially when the histone tetramer is not bound to DNA.

It is found in the nucleus. The protein resides in the nucleolus. Its function is as follows. Histone chaperone that stabilizes pre-existing histone tetramers and regulates replication-independent histone exchange on chromatin. Required for normal chromatin refolding in the coding region of transcribed genes, and for the suppression of spurious transcription. Binds DNA and histones and promotes nucleosome assembly (in vitro). Facilitates formation of tetrameric histone complexes containing histone H3 and H4. Modulates RNA polymerase 1-mediated transcription. Binds DNA, with a preference for branched DNA species, such as Y-form DNA and Holliday junction DNA. The sequence is that of Protein SPT2 homolog (spty2d1) from Xenopus tropicalis (Western clawed frog).